The sequence spans 438 residues: uncharacterized protein (438 aa).

Positions 1 to 19 (MKKLLLAASIICLASAGLA) are cleaved as a signal peptide.

This is an uncharacterized protein from Rickettsia conorii (strain ATCC VR-613 / Malish 7).